Reading from the N-terminus, the 240-residue chain is tRNA (guanine-N(1)-)-methyltransferase (240 aa).

S-adenosyl-L-methionine is bound by residues G110 and L129–L134.

The protein belongs to the RNA methyltransferase TrmD family. In terms of assembly, homodimer.

It localises to the cytoplasm. It catalyses the reaction guanosine(37) in tRNA + S-adenosyl-L-methionine = N(1)-methylguanosine(37) in tRNA + S-adenosyl-L-homocysteine + H(+). In terms of biological role, specifically methylates guanosine-37 in various tRNAs. The protein is tRNA (guanine-N(1)-)-methyltransferase of Clostridium botulinum (strain Kyoto / Type A2).